The chain runs to 429 residues: Hemoglobinase (429 aa).

Positions 1–19 (MMLFSLFLISILHILLVKC) are cleaved as a signal peptide. The propeptide occupies 20–31 (QLDTNYEVSDET). The active site involves H151. The interval 288–309 (FQGSRDKSSSENDEPPMKPRHS) is disordered. A propeptide spanning residues 292–429 (RDKSSSENDE…INEAIIKICG (138 aa)) is cleaved from the precursor.

The protein belongs to the peptidase C13 family.

The enzyme catalyses Hydrolysis of proteins and small molecule substrates at -Asn-|-Xaa- bonds.. Its function is as follows. This protease is used by the parasite for degradation of the host globin. This is Hemoglobinase from Schistosoma mansoni (Blood fluke).